We begin with the raw amino-acid sequence, 348 residues long: Succinylglutamate desuccinylase (348 aa).

H67, E70, and H164 together coordinate Zn(2+). The active site involves E228.

This sequence belongs to the AspA/AstE family. Succinylglutamate desuccinylase subfamily. The cofactor is Zn(2+).

It catalyses the reaction N-succinyl-L-glutamate + H2O = L-glutamate + succinate. It participates in amino-acid degradation; L-arginine degradation via AST pathway; L-glutamate and succinate from L-arginine: step 5/5. Transforms N(2)-succinylglutamate into succinate and glutamate. The sequence is that of Succinylglutamate desuccinylase from Shewanella denitrificans (strain OS217 / ATCC BAA-1090 / DSM 15013).